A 562-amino-acid polypeptide reads, in one-letter code: Efflux pump apf11 (562 aa).

Composition is skewed to low complexity over residues 1–10 (MGDISAATKA) and 18–30 (TPET…SSDT). The disordered stretch occupies residues 1-36 (MGDISAATKAPAPPTPATPETNTTSSSSDTDVQHEP). N-linked (GlcNAc...) asparagine glycosylation is present at Asn-22. Transmembrane regions (helical) follow at residues 46–66 (LVIF…TIVA), 83–103 (AWYG…FGKI), 110–130 (KLVF…CALA), 141–161 (AIAG…TALT), 169–189 (VYTA…PIIG), 200–220 (WCFW…VFCL), 249–269 (GGLA…WGGT), and 278–298 (IIVL…HQHW). Asn-312 carries N-linked (GlcNAc...) asparagine glycosylation. Helical transmembrane passes span 317–337 (MFLL…YYLP), 356–376 (LAMV…AGAV), 382–404 (FVFF…HPSI), 414–434 (ILFG…VQVA), 447–467 (VMLV…TLFL), and 516–536 (FLIG…IRWI).

Belongs to the major facilitator superfamily. TCR/Tet family.

The protein resides in the membrane. Its pathway is secondary metabolite biosynthesis. Its function is as follows. Efflux pump; part of the gene cluster that mediates the biosynthesis of the cyclic tetrapeptide apicidin F (APF). The sequence is that of Efflux pump apf11 (apf11) from Gibberella fujikuroi (strain CBS 195.34 / IMI 58289 / NRRL A-6831) (Bakanae and foot rot disease fungus).